The following is a 1638-amino-acid chain: ATP-dependent helicase brm (1638 aa).

Disordered stretches follow at residues 1-137 and 201-387; these read MASP…SQEN and QMQQ…GMPM. Residues 7 to 51 are compositionally biased toward pro residues; the sequence is ANSPMPPPQAPSPMAPPSQSPAPSPHSPYPHQQPGPLQGPPPPGH. Over residues 52-63 the composition is skewed to low complexity; the sequence is PGAYGHPMQHGP. Over residues 121–131 the composition is skewed to pro residues; sequence GGPPGGPPPPE. Residues 173 to 208 form the QLQ domain; sequence HLNGNQVNLLRTQITAYRLLARNKPISMQMQQALQA. A compositionally biased stretch (low complexity) spans 201 to 211; that stretch reads QMQQALQAAQQ. Pro residues-rich tracts occupy residues 212–231, 238–253, 263–272, and 279–304; these read QPPP…PPPG, PPVP…PSAG, ASNPYGPPVP, and APPP…PPPI. Low complexity-rich tracts occupy residues 305–317 and 365–382; these read QQQQ…QQQS and PGSQ…QVPP. One can recognise an HSA domain in the interval 501 to 573; it reads QKLEAERKRR…EKERMRRLMA (73 aa). Residues 691–730 form a disordered region; it reads DEEDSCGSNDDHKPKVEEQPTATEDATDKAQATGNDEDAK. Phosphoserine occurs at positions 695 and 698. A compositionally biased stretch (basic and acidic residues) spans 699–708; it reads NDDHKPKVEE. A compositionally biased stretch (polar residues) spans 710-724; the sequence is PTATEDATDKAQATG. The Helicase ATP-binding domain maps to 785-950; that stretch reads VSLYNNNLNG…WALLNFLLPS (166 aa). 798 to 805 is a binding site for ATP; the sequence is DEMGLGKT. A DEGH box motif is present at residues 900 to 903; that stretch reads DEGH. Positions 1102 to 1263 constitute a Helicase C-terminal domain; sequence LLDRILPKLK…QKSTGSERQQ (162 aa). The segment covering 1380–1391 has biased composition (acidic residues); that stretch reads DGAEFDEEEEED. Positions 1380–1412 are disordered; sequence DGAEFDEEEEEDDSKRKRRKRKNRKEESDDDSL. Ser1407 and Ser1411 each carry phosphoserine. The Bromo domain maps to 1425-1530; that stretch reads RSKKQMHKIM…KVFVGARQRI (106 aa). The tract at residues 1544 to 1578 is disordered; the sequence is NTGEAHGNGGSDNSDNDDDDGGDDGSDDEEIATTS. The segment covering 1557–1574 has biased composition (acidic residues); it reads SDNDDDDGGDDGSDDEEI. Phosphoserine is present on residues Ser1591 and Ser1594. Low complexity predominate over residues 1592-1604; sequence LASAPATPTQSSS. The interval 1592-1638 is disordered; it reads LASAPATPTQSSSNVSSGAATTSKKQTRRKRSQKKYTISDDDDDDMD. A compositionally biased stretch (basic residues) spans 1616 to 1625; it reads KQTRRKRSQK.

Component of the Brahma complex, which is composed of brm, osa, mor, Snr1/Bap45, dalao/Bap111, Bap55, Bap60 and Act42A/Bap47. Interacts with asf1. Associates with the brm-HDAC3-erm repressor complex, composed of brm, HDAC3 and erm. Interacts with erm and HDAC3.

It is found in the nucleus. It catalyses the reaction ATP + H2O = ADP + phosphate + H(+). Functionally, transcriptional regulator. Acts as a coactivator, assisting one or more dedicated transcriptional activators of ANTC and BXC homeotic gene clusters. Can counteract the repressive effect of Polycomb protein. ATPase subunit of the Brahma complex, a multiprotein complex which is the equivalent of the yeast SWI/SNF complex and acts by remodeling the chromatin by catalyzing an ATP-dependent alteration in the structure of nucleosomal DNA. This complex can both serve as a transcriptional coactivator or corepressor, depending on the context. In type II neuroblast lineage, as part of the Brm remodeling complex, suppresses the formation of ectopic neuroblasts probably through interaction with erm and HDAC3. This Drosophila melanogaster (Fruit fly) protein is ATP-dependent helicase brm (brm).